Consider the following 336-residue polypeptide: Phytochrome A-associated F-box protein (336 aa).

Positions 3–55 (ESVFSCIPEDVVFNIFFKLQDDPRNWARLACVCTKFSSIVRNVCCKTQCYSAI) constitute an F-box domain. A Nuclear localization signal motif is present at residues 197–201 (RKRRK).

As to quaternary structure, probable component of an E3 ubiquitin ligase SCF complex. Interacts with SKP1A/ASK1 and SKP1B/ASK2.

The protein resides in the nucleus. It participates in protein modification; protein ubiquitination. In terms of biological role, component of SCF(ASK-cullin-F-box) E3 ubiquitin ligase complexes, which may mediate the ubiquitination and subsequent proteasomal degradation of target proteins. Negative regulator of the phyA signaling pathway that shifts the responsiveness of the phyA signaling system associated with hypocotyl elongation from red to far-red wavelength. In Arabidopsis thaliana (Mouse-ear cress), this protein is Phytochrome A-associated F-box protein (EID1).